The following is a 217-amino-acid chain: MRLVLLGAPGAGKGTQAVVISQKYNVPHISTGDIFRSNIKNGTELGRKAKEYIDKGLLVPDELTVDIVKDRISQPDCKAGFILDGFPRTIYQAERLDEILKELNVELDCALNIYVPDEEIIKRMSGRRVCSKCGMSYHIVYNQPKVENICDSCNGELIQRDDDKEETVIQRLNTYHKQTEPLIEYYEKKGKLLTVHGQEGVDDTTKEVLNALSGVKL.

10-15 is an ATP binding site; that stretch reads GAGKGT. The tract at residues 30 to 59 is NMP; it reads STGDIFRSNIKNGTELGRKAKEYIDKGLLV. AMP-binding positions include Thr31, Arg36, 57 to 59, 85 to 88, and Gln92; these read LLV and GFPR. The interval 126–163 is LID; sequence GRRVCSKCGMSYHIVYNQPKVENICDSCNGELIQRDDD. An ATP-binding site is contributed by Arg127. 2 residues coordinate Zn(2+): Cys130 and Cys133. 136-137 provides a ligand contact to ATP; it reads SY. Zn(2+) contacts are provided by Cys150 and Cys153. AMP contacts are provided by Arg160 and Arg171. Glu199 contributes to the ATP binding site.

This sequence belongs to the adenylate kinase family. In terms of assembly, monomer.

It is found in the cytoplasm. It carries out the reaction AMP + ATP = 2 ADP. Its pathway is purine metabolism; AMP biosynthesis via salvage pathway; AMP from ADP: step 1/1. In terms of biological role, catalyzes the reversible transfer of the terminal phosphate group between ATP and AMP. Plays an important role in cellular energy homeostasis and in adenine nucleotide metabolism. In Acetivibrio thermocellus (strain ATCC 27405 / DSM 1237 / JCM 9322 / NBRC 103400 / NCIMB 10682 / NRRL B-4536 / VPI 7372) (Clostridium thermocellum), this protein is Adenylate kinase.